The chain runs to 491 residues: Cytochrome P450 2H2 (491 aa).

Residue Cys-436 participates in heme binding.

It belongs to the cytochrome P450 family. Heme is required as a cofactor.

Its subcellular location is the endoplasmic reticulum membrane. The protein localises to the microsome membrane. The catalysed reaction is an organic molecule + reduced [NADPH--hemoprotein reductase] + O2 = an alcohol + oxidized [NADPH--hemoprotein reductase] + H2O + H(+). Cytochromes P450 are a group of heme-thiolate monooxygenases. In liver microsomes, this enzyme is involved in an NADPH-dependent electron transport pathway. It oxidizes a variety of structurally unrelated compounds, including steroids, fatty acids, and xenobiotics. This chain is Cytochrome P450 2H2 (CYP2H2), found in Gallus gallus (Chicken).